The chain runs to 485 residues: Eukaryotic translation initiation factor 3 subunit E (485 aa).

Positions 219–391 (NQPDGPDGIV…GEIHITKPVT (173 aa)) constitute a PCI domain. The disordered stretch occupies residues 444–485 (QGGGKSNKKGDYKKGDYKKGGDFKKGGDFKKGGDHKKRAWVK). Positions 451 to 475 (KKGDYKKGDYKKGGDFKKGGDFKKG) are enriched in basic and acidic residues. Residues 476–485 (GDHKKRAWVK) are compositionally biased toward basic residues.

This sequence belongs to the eIF-3 subunit E family. As to quaternary structure, component of the eukaryotic translation initiation factor 3 (eIF-3) complex.

Its subcellular location is the cytoplasm. In terms of biological role, component of the eukaryotic translation initiation factor 3 (eIF-3) complex, which is involved in protein synthesis of a specialized repertoire of mRNAs and, together with other initiation factors, stimulates binding of mRNA and methionyl-tRNAi to the 40S ribosome. The eIF-3 complex specifically targets and initiates translation of a subset of mRNAs involved in cell proliferation. The protein is Eukaryotic translation initiation factor 3 subunit E of Monosiga brevicollis (Choanoflagellate).